Consider the following 479-residue polypeptide: Glutamyl-tRNA reductase (479 aa).

Substrate-binding positions include 48-51, S104, 109-111, and Q115; these read TCNR and ERQ. The Nucleophile role is filled by C49. 189 to 194 serves as a coordination point for NADP(+); that stretch reads GAGKMG. Residues 417–455 form a disordered region; the sequence is DAGRSLAEAPDADTPDLGEAPSRCPYMTHDPGGDGTETE.

It belongs to the glutamyl-tRNA reductase family. In terms of assembly, homodimer.

It carries out the reaction (S)-4-amino-5-oxopentanoate + tRNA(Glu) + NADP(+) = L-glutamyl-tRNA(Glu) + NADPH + H(+). The protein operates within porphyrin-containing compound metabolism; protoporphyrin-IX biosynthesis; 5-aminolevulinate from L-glutamyl-tRNA(Glu): step 1/2. Functionally, catalyzes the NADPH-dependent reduction of glutamyl-tRNA(Glu) to glutamate 1-semialdehyde (GSA). The polypeptide is Glutamyl-tRNA reductase (Salinibacter ruber (strain DSM 13855 / M31)).